The chain runs to 184 residues: GTP cyclohydrolase 1 (184 aa).

Zn(2+) contacts are provided by Cys-74, His-77, and Cys-145.

It belongs to the GTP cyclohydrolase I family. Toroid-shaped homodecamer, composed of two pentamers of five dimers.

It catalyses the reaction GTP + H2O = 7,8-dihydroneopterin 3'-triphosphate + formate + H(+). It functions in the pathway cofactor biosynthesis; 7,8-dihydroneopterin triphosphate biosynthesis; 7,8-dihydroneopterin triphosphate from GTP: step 1/1. In Aquifex aeolicus (strain VF5), this protein is GTP cyclohydrolase 1 (folE).